Reading from the N-terminus, the 148-residue chain is NADPH-dependent 7-cyano-7-deazaguanine reductase (148 aa).

Catalysis depends on Cys50, which acts as the Thioimide intermediate. Asp57 serves as the catalytic Proton donor. Substrate is bound by residues 72–74 and 91–92; these read VES and HE.

The protein belongs to the GTP cyclohydrolase I family. QueF type 1 subfamily.

The protein resides in the cytoplasm. The catalysed reaction is 7-aminomethyl-7-carbaguanine + 2 NADP(+) = 7-cyano-7-deazaguanine + 2 NADPH + 3 H(+). The protein operates within tRNA modification; tRNA-queuosine biosynthesis. In terms of biological role, catalyzes the NADPH-dependent reduction of 7-cyano-7-deazaguanine (preQ0) to 7-aminomethyl-7-deazaguanine (preQ1). This is NADPH-dependent 7-cyano-7-deazaguanine reductase from Helicobacter acinonychis (strain Sheeba).